A 213-amino-acid chain; its full sequence is Orotate phosphoribosyltransferase (213 aa).

Lys-26 provides a ligand contact to 5-phospho-alpha-D-ribose 1-diphosphate. 34–35 (FF) contributes to the orotate binding site. 5-phospho-alpha-D-ribose 1-diphosphate is bound by residues 72 to 73 (YK), Arg-98, Lys-99, Lys-102, His-104, and 123 to 131 (DDVISAGTS). Ser-127 and Arg-155 together coordinate orotate.

This sequence belongs to the purine/pyrimidine phosphoribosyltransferase family. PyrE subfamily. As to quaternary structure, homodimer. The cofactor is Mg(2+).

It carries out the reaction orotidine 5'-phosphate + diphosphate = orotate + 5-phospho-alpha-D-ribose 1-diphosphate. The protein operates within pyrimidine metabolism; UMP biosynthesis via de novo pathway; UMP from orotate: step 1/2. Its function is as follows. Catalyzes the transfer of a ribosyl phosphate group from 5-phosphoribose 1-diphosphate to orotate, leading to the formation of orotidine monophosphate (OMP). This is Orotate phosphoribosyltransferase from Neisseria meningitidis serogroup A / serotype 4A (strain DSM 15465 / Z2491).